Here is a 510-residue protein sequence, read N- to C-terminus: Inositol-3-phosphate synthase (510 aa).

The NAD(+) site is built by Gly70, Gly71, Asn72, Asn73, Asp143, Ile180, Gln190, Arg193, Thr230, Ala231, Asn232, Thr233, Gly281, Ser282, Asp306, Ser309, Asn340, Asn341, Asp342, Lys355, Gly393, Asp394, Asp422, and Ser423.

Belongs to the myo-inositol 1-phosphate synthase family. NAD(+) is required as a cofactor.

Its subcellular location is the cytoplasm. The protein resides in the cytosol. It is found in the nucleus. It catalyses the reaction D-glucose 6-phosphate = 1D-myo-inositol 3-phosphate. Its pathway is polyol metabolism; myo-inositol biosynthesis; myo-inositol from D-glucose 6-phosphate: step 1/2. Its function is as follows. Key enzyme in myo-inositol biosynthesis pathway that catalyzes the conversion of glucose 6-phosphate to 1-myo-inositol 1-phosphate in a NAD-dependent manner. The protein is Inositol-3-phosphate synthase (INPS1) of Nicotiana paniculata.